The sequence spans 566 residues: Proline--tRNA ligase (566 aa).

This sequence belongs to the class-II aminoacyl-tRNA synthetase family. ProS type 1 subfamily. In terms of assembly, homodimer.

It is found in the cytoplasm. The catalysed reaction is tRNA(Pro) + L-proline + ATP = L-prolyl-tRNA(Pro) + AMP + diphosphate. Catalyzes the attachment of proline to tRNA(Pro) in a two-step reaction: proline is first activated by ATP to form Pro-AMP and then transferred to the acceptor end of tRNA(Pro). As ProRS can inadvertently accommodate and process non-cognate amino acids such as alanine and cysteine, to avoid such errors it has two additional distinct editing activities against alanine. One activity is designated as 'pretransfer' editing and involves the tRNA(Pro)-independent hydrolysis of activated Ala-AMP. The other activity is designated 'posttransfer' editing and involves deacylation of mischarged Ala-tRNA(Pro). The misacylated Cys-tRNA(Pro) is not edited by ProRS. This chain is Proline--tRNA ligase, found in Bacillus mycoides (strain KBAB4) (Bacillus weihenstephanensis).